We begin with the raw amino-acid sequence, 222 residues long: Kinetochore protein Spc25 (222 aa).

Positions 51–86 form a coiled coil; sequence RHQRKVGKLQKVLMERREELDKRVSFIEELDRELEA.

It belongs to the SPC25 family. In terms of assembly, component of the Ndc80 complex, which is composed of Ndc80, Nuf2 and Spc25.

The protein resides in the nucleus. The protein localises to the chromosome. It localises to the centromere. It is found in the kinetochore. Acts as a component of the essential kinetochore-associated Ndc80 complex, which is required for chromosome segregation and spindle checkpoint activity during meiosis and mitosis. Required for kinetochore integrity and the organization of stable microtubule binding sites in the outer plate of the kinetochore. Participates in SAC signaling that responds specifically to disruptions in spindle microtubule dynamics. The NDC80 complex synergistically enhances the affinity of the SKA1 complex for microtubules and may allow the NDC80 complex to track depolymerizing microtubules. This Drosophila simulans (Fruit fly) protein is Kinetochore protein Spc25.